Here is a 135-residue protein sequence, read N- to C-terminus: Evasin P1134 (135 aa).

An N-terminal signal peptide occupies residues M1–A31. Cystine bridges form between C41/C63, C45/C65, and C56/C76. N44 carries an N-linked (GlcNAc...) asparagine glycan. The segment at E88–P112 is disordered.

The protein resides in the secreted. Functionally, salivary chemokine-binding protein which binds to host chemokine CXCL1. This chain is Evasin P1134, found in Ixodes ricinus (Common tick).